A 69-amino-acid polypeptide reads, in one-letter code: Mu-conotoxin-like Am3.3 (69 aa).

The N-terminal stretch at 1–20 is a signal peptide; that stretch reads MMSKLGVLLTICLLLFPLTA. A propeptide spanning residues 21–52 is cleaved from the precursor; the sequence is VPLDGDQPADRPAERMQDDISSENHPMFDAIR. C68 bears the Cysteine amide mark.

This sequence belongs to the conotoxin M family. In terms of processing, is not hydroxylated. Post-translationally, contains 3 disulfide bonds. As to expression, expressed by the venom duct.

The protein localises to the secreted. Mu-conotoxins block voltage-gated sodium channels (Nav). This Conus amadis (Amadis cone) protein is Mu-conotoxin-like Am3.3.